A 430-amino-acid polypeptide reads, in one-letter code: KIN17-like protein (430 aa).

The C2H2-type zinc finger occupies 28-50; it reads CQMCQKQCRDENGFKCHCMSESH. The tract at residues 51–160 is winged helix-turn-helix (wHTH); sequence QRQMQVFGQA…KARLKRKRIK (110 aa). Positions 147 to 183 form a coiled coil; the sequence is EQAVKARLKRKRIKSDLAEDERQERMIARQIERAQQS. The Nuclear localization signal (NLS) signature appears at 155 to 158; it reads KRKR. 2 disordered regions span residues 179 to 230 and 261 to 284; these read RAQQ…ANKA and EEED…GKDA. Residues 191–224 show a composition bias toward acidic residues; it reads LGDDASPDGSEGESGSEDEYSDSENDHEGQEEDA. Residues 261–278 show a composition bias toward basic and acidic residues; sequence EEEDEVSARDKEKEELAK. A coiled-coil region spans residues 283 to 312; it reads DAINAAEARRSALDELMKEEEKAKERSNRK. The C-terminal subdomain A stretch occupies residues 319-370; that stretch reads GIVVKVMSKSLAEKGYCKQKGVVKRVIDKYVGEIEMLESKHVLRVDQDELET. Residues 376–427 are C-terminal subdomain B; sequence GGLVRIVNGAYRGSNARLLSVDTERFCAKVQVEKGLYDGKVLKAIEYEDICK.

It belongs to the KIN17 family.

It localises to the nucleus. The chain is KIN17-like protein from Oryza sativa subsp. japonica (Rice).